The following is a 547-amino-acid chain: Chaperonin GroEL (547 aa).

ATP is bound by residues 30 to 33, K51, 87 to 91, G415, and D496; these read TLGP and DGTTT.

It belongs to the chaperonin (HSP60) family. As to quaternary structure, forms a cylinder of 14 subunits composed of two heptameric rings stacked back-to-back. Interacts with the co-chaperonin GroES.

It is found in the cytoplasm. The enzyme catalyses ATP + H2O + a folded polypeptide = ADP + phosphate + an unfolded polypeptide.. In terms of biological role, together with its co-chaperonin GroES, plays an essential role in assisting protein folding. The GroEL-GroES system forms a nano-cage that allows encapsulation of the non-native substrate proteins and provides a physical environment optimized to promote and accelerate protein folding. The sequence is that of Chaperonin GroEL from Haemophilus ducreyi (strain 35000HP / ATCC 700724).